The chain runs to 387 residues: Eukaryotic translation initiation factor 3 subunit M (387 aa).

Positions L181–H340 constitute a PCI domain.

Belongs to the eIF-3 subunit M family. Component of the eukaryotic translation initiation factor 3 (eIF-3) complex. The eIF-3 complex interacts with pix.

The protein resides in the cytoplasm. It localises to the golgi apparatus. Component of the eukaryotic translation initiation factor 3 (eIF-3) complex, which is involved in protein synthesis of a specialized repertoire of mRNAs and, together with other initiation factors, stimulates binding of mRNA and methionyl-tRNAi to the 40S ribosome. The eIF-3 complex specifically targets and initiates translation of a subset of mRNAs involved in cell proliferation. The polypeptide is Eukaryotic translation initiation factor 3 subunit M (Drosophila grimshawi (Hawaiian fruit fly)).